Consider the following 625-residue polypeptide: MASPDKKSSLAALTLAAVGIVYGDIGTSPLYTMKEVFSKEHGLDLTPENLLGVVSLIVWGLIIIVSLKYVTLVLRANNRGEGGIMALMALALSSVTKNSRWYFPLMVMGLFGATLFYGDSVITPAISVLSAVEGLGVATSAFDPYVVPVTVAILVGLYSLQARGTAGIGKWFGPVMLIWFITLAVMGVVNIIDAPYILHALNPWHALHFLSGNGFLAFIALGAVVLAFTGAEALYADMGHFGAKPIRMAWFLIAFPALSLNYLGQGALLLLNPEAVTNPFYQQLGAWSIYPLVALSTMAAIIASQATISGTFSMTKQAIALGFLPRMKIEFTSASQIGQIYIPAVNWLQMIVVVLAVIGFGSSSNLAAAYGIAVTATMMVTTVLTFFVIRYRWKYNLILCVAATGFFLVIDLSLFSANMLKLFHGGWFPLLLGVVLFTLMLTWKRGRELVFENLQKHAIPLEDFLASLFISPPTRVPGTAIFLRGESDGVPHAMLHNLSHNKVLHERVVFLTVRMMEVPYVPKADQVRIEHLGDDCYQMNVTYGFKNVPDIPAALDLAKEQGLEFEMMETSFFIARQTVVANPVRGMALWREHIFVAMSRHARGAADYYQIPSNRVIELGTKVEI.

Transmembrane regions (helical) follow at residues 10–30 (LAAL…TSPL), 50–70 (LLGV…LKYV), 102–122 (YFPL…DSVI), 135–155 (LGVA…AILV), 172–192 (FGPV…VNII), 214–234 (GFLA…AEAL), 251–271 (FLIA…LLLL), 284–304 (LGAW…IIAS), 340–360 (IYIP…VIGF), 369–389 (AYGI…FFVI), 397–417 (LILC…LFSA), and 422–442 (LFHG…LMLT).

It belongs to the HAK/KUP transporter (TC 2.A.72) family.

The protein resides in the cell inner membrane. It catalyses the reaction K(+)(in) + H(+)(in) = K(+)(out) + H(+)(out). Transport of potassium into the cell. Likely operates as a K(+):H(+) symporter. The polypeptide is Probable potassium transport system protein Kup (Herminiimonas arsenicoxydans).